We begin with the raw amino-acid sequence, 396 residues long: Elongation factor Tu (396 aa).

The tr-type G domain occupies 10-206 (KPHVNIGTIG…AVDAYIPEPE (197 aa)). Residues 19-26 (GHVDHGKT) are G1. 19-26 (GHVDHGKT) contributes to the GTP binding site. A Mg(2+)-binding site is contributed by Thr26. A G2 region spans residues 60-64 (GITIS). Positions 81-84 (DCPG) are G3. Residues 81–85 (DCPGH) and 136–139 (NKVD) contribute to the GTP site. Residues 136 to 139 (NKVD) form a G4 region. Positions 174–176 (SAL) are G5.

It belongs to the TRAFAC class translation factor GTPase superfamily. Classic translation factor GTPase family. EF-Tu/EF-1A subfamily. As to quaternary structure, monomer.

The protein resides in the cytoplasm. The enzyme catalyses GTP + H2O = GDP + phosphate + H(+). Functionally, GTP hydrolase that promotes the GTP-dependent binding of aminoacyl-tRNA to the A-site of ribosomes during protein biosynthesis. The polypeptide is Elongation factor Tu (Magnetococcus marinus (strain ATCC BAA-1437 / JCM 17883 / MC-1)).